The sequence spans 401 residues: Elongation factor Tu (401 aa).

The tr-type G domain occupies 10-211; that stretch reads KPHLNVGTIG…ALDTFVPNPK (202 aa). Residues 19 to 26 are G1; that stretch reads GHVDHGKT. 19–26 contacts GTP; that stretch reads GHVDHGKT. A Mg(2+)-binding site is contributed by Thr26. Residues 62–66 are G2; the sequence is GITIA. Positions 83-86 are G3; the sequence is DCPG. GTP-binding positions include 83–87 and 138–141; these read DCPGH and NKAD. Residues 138 to 141 are G4; the sequence is NKAD. The tract at residues 179–181 is G5; the sequence is SAV.

Belongs to the TRAFAC class translation factor GTPase superfamily. Classic translation factor GTPase family. EF-Tu/EF-1A subfamily. Monomer.

It is found in the cytoplasm. The enzyme catalyses GTP + H2O = GDP + phosphate + H(+). Functionally, GTP hydrolase that promotes the GTP-dependent binding of aminoacyl-tRNA to the A-site of ribosomes during protein biosynthesis. The chain is Elongation factor Tu from Leptospira borgpetersenii serovar Hardjo-bovis (strain JB197).